The chain runs to 147 residues: Antiholin-like protein LrgA (147 aa).

4 helical membrane-spanning segments follow: residues 12 to 32 (PAHF…SKII), 35 to 55 (FMPI…VLLC), 74 to 94 (NIGL…GVIS), and 98 to 118 (FLII…TGYV).

Belongs to the CidA/LrgA family. LrgA subfamily.

The protein resides in the cell membrane. Its function is as follows. Inhibits the expression or activity of extracellular murein hydrolases by interacting, possibly with LrgB, with the holin-like proteins CidA and/or CidB. The LrgAB and CidAB proteins may affect the proton motive force of the membrane. May be involved in programmed cell death (PCD), possibly triggering PCD in response to antibiotics and environmental stresses. The polypeptide is Antiholin-like protein LrgA (Staphylococcus aureus (strain MSSA476)).